A 997-amino-acid chain; its full sequence is MTISLSNIKKRDHSKISDGTSGESSLVKRKQLESATGDQEEEYTDHEIIIEPLHFANNNNTVLTDSENYLRWQNTISNVVKSVVSIHFSQVAPFDCDSALVSEATGFVVDAKLGIILTNRHVVGPGPFVGYVVFDNHEECDVIPIYRDPVHDFGFLKFDPKNIKYSKIKALTLKPSLAKVGSEIRVVGNDAGEKLSILAGFISRIDRNAPEYGELTYNDFNTEYIQAAASASGGSSGSPVVNIDGYAVALQAGGSTEASTDFFLPLDRILRALICIQTNKPITRGTIQVQWLLKPYDECRRLGLTSERESEARAKFPENIGLLVAETVLREGPGYDKIKEGDTLISINGETISSFMQVDKIQDENVGKEIQLVIQRGGVECTVTCTVGDLHAITPHRYVEVCGATFHELSYQMARFYALPVRGVFLSSASGSFNFDSKERVGWIVDSIDNKETPDLDTFIEIMKTIPDRKRVTVRYHHLTDQHSPLVTSIYIDRHWCNEFRVYTRNDTTGIWDYKNVADPLPADALKPRSAKIIPIPVNNEKVAKLSSSLCTVATMAAVPLDSLSADILKTSGLIIDAEKGYVLVSRRVVPHDCLDTFVTIADSLVVPATVEFLHPTHNFAIVKYDPELVKAPLITPKLSTTRMKRGDKLQFIGFTQNDRIVTSETTVTDISSVSIPSNLIPRYRATNLEAISIDCNVSTRCNSGILTDNDGTVRGLWLPFLGERLENKEKVYLMGLDIMDCREVIDILKNGGKPRVSIVDAGFGSISVLQARIRGVPEEWIMRMEHESNNRLQFITVSRVSYTEDKIHLETGDVILSVNGKLVTEMNDLNGVVSSADGILPSAMLDFKVVRDGNIVDLKIKTVEVQETDRFVIFAGSILQKPHHAVLQAMVDVPKGVYCTFRGESSPALQYGISATNFITHVNEIETPDLDTFLKVVKTIPDNSYCKMRLMTFDNVPFAISLKTNYHYFPTAELKRDNITHKWIEKEFTGNSQSEK.

A disordered region spans residues 1 to 43; that stretch reads MTISLSNIKKRDHSKISDGTSGESSLVKRKQLESATGDQEEEY. A serine protease region spans residues 83–273; sequence VVSIHFSQVA…LPLDRILRAL (191 aa). Active-site charge relay system residues include histidine 121, aspartate 152, and serine 235. PDZ domains are found at residues 300-378 and 779-854; these read RRLG…QRGG and EEWI…VRDG.

The protein belongs to the peptidase S1C family. As to quaternary structure, interacts with BIR1.

It is found in the nucleus. Its function is as follows. Nuclear serine protease which mediates apoptosis through proteolysis of the apoptotic inhibitor BIR1. In Saccharomyces cerevisiae (strain YJM789) (Baker's yeast), this protein is Pro-apoptotic serine protease NMA111 (NMA111).